We begin with the raw amino-acid sequence, 53 residues long: Ovomucoid (53 aa).

One can recognise a Kazal-like domain in the interval 3 to 53 (VDCSEYPQPTCTTEHRPVCGSNNETYGNKCNFCNAVVKSNGTLTVSHFGKC). Intrachain disulfides connect Cys-5-Cys-35, Cys-13-Cys-32, and Cys-21-Cys-53. Asn-42 is a glycosylation site (N-linked (GlcNAc...) asparagine).

It localises to the secreted. The chain is Ovomucoid from Polyplectron bicalcaratum (Grey peacock-pheasant).